A 121-amino-acid chain; its full sequence is Large ribosomal subunit protein mL52 (121 aa).

Residues 1-22 (MAALGTWLSSVRRLHCSVVARA) constitute a mitochondrion transit peptide. The span at 98–109 (QEERKKEHDLKP) shows a compositional bias: basic and acidic residues. A disordered region spans residues 98–121 (QEERKKEHDLKPKGTLLRSPLPNQ).

It belongs to the mitochondrion-specific ribosomal protein mL52 family. As to quaternary structure, component of the mitochondrial ribosome large subunit (39S) which comprises a 16S rRNA and about 50 distinct proteins.

The protein localises to the mitochondrion. In Mus musculus (Mouse), this protein is Large ribosomal subunit protein mL52 (Mrpl52).